We begin with the raw amino-acid sequence, 386 residues long: ORC1-type DNA replication protein 3 (386 aa).

ATP contacts are provided by residues 65 to 69 (TGKTF) and Tyr206.

This sequence belongs to the CDC6/cdc18 family.

In terms of biological role, involved in regulation of DNA replication. In Sulfurisphaera tokodaii (strain DSM 16993 / JCM 10545 / NBRC 100140 / 7) (Sulfolobus tokodaii), this protein is ORC1-type DNA replication protein 3 (cdc6-3).